The sequence spans 309 residues: Homoserine O-succinyltransferase (309 aa).

The Acyl-thioester intermediate role is filled by C142. Substrate-binding residues include K163 and S192. The active-site Proton acceptor is the H235. E237 is an active-site residue. A substrate-binding site is contributed by R249.

This sequence belongs to the MetA family.

Its subcellular location is the cytoplasm. The enzyme catalyses L-homoserine + succinyl-CoA = O-succinyl-L-homoserine + CoA. It participates in amino-acid biosynthesis; L-methionine biosynthesis via de novo pathway; O-succinyl-L-homoserine from L-homoserine: step 1/1. Functionally, transfers a succinyl group from succinyl-CoA to L-homoserine, forming succinyl-L-homoserine. This is Homoserine O-succinyltransferase from Klebsiella pneumoniae subsp. pneumoniae (strain ATCC 700721 / MGH 78578).